The following is a 126-amino-acid chain: Large ribosomal subunit protein eL32 (126 aa).

It belongs to the eukaryotic ribosomal protein eL32 family.

This Thermococcus onnurineus (strain NA1) protein is Large ribosomal subunit protein eL32.